The sequence spans 273 residues: NH(3)-dependent NAD(+) synthetase (273 aa).

46 to 53 (GISGGQDS) contacts ATP. Aspartate 52 lines the Mg(2+) pocket. Arginine 139 serves as a coordination point for deamido-NAD(+). An ATP-binding site is contributed by threonine 159. Residue glutamate 164 participates in Mg(2+) binding. 2 residues coordinate deamido-NAD(+): lysine 172 and aspartate 179. The ATP site is built by lysine 188 and threonine 210. 259–260 (HK) contacts deamido-NAD(+).

This sequence belongs to the NAD synthetase family. In terms of assembly, homodimer.

The catalysed reaction is deamido-NAD(+) + NH4(+) + ATP = AMP + diphosphate + NAD(+) + H(+). The protein operates within cofactor biosynthesis; NAD(+) biosynthesis; NAD(+) from deamido-NAD(+) (ammonia route): step 1/1. Functionally, catalyzes the ATP-dependent amidation of deamido-NAD to form NAD. Uses ammonia as a nitrogen source. The sequence is that of NH(3)-dependent NAD(+) synthetase from Streptococcus thermophilus (strain ATCC BAA-250 / LMG 18311).